The following is a 471-amino-acid chain: Putative multidrug resistance protein MdtD (471 aa).

Residues 1–11 lie on the Periplasmic side of the membrane; sequence MTDLPDSTRWQ. The helical transmembrane segment at 12-32 threads the bilayer; the sequence is LWIVAFGFFMQSLDTTIVNTA. Over 33–48 the chain is Cytoplasmic; sequence LPSMAQSLGESPLHMH. Residues 49-69 traverse the membrane as a helical segment; the sequence is MVIVSYVLTVAVMLPASGWLA. Topologically, residues 70–76 are periplasmic; the sequence is DKVGVRN. The chain crosses the membrane as a helical span at residues 77-97; it reads IFFTAIVLFTLGSLFCALSGT. Over 98-101 the chain is Cytoplasmic; sequence LNEL. Residues 102–124 form a helical membrane-spanning segment; it reads LLARALQGVGGAMMVPVGRLTVM. Topologically, residues 125–137 are periplasmic; sequence KIVPREQYMAAMT. A helical transmembrane segment spans residues 138 to 158; sequence FVTLPGQVGPLLGPALGGLLV. The Cytoplasmic segment spans residues 159 to 164; that stretch reads EYASWH. Residues 165 to 185 form a helical membrane-spanning segment; that stretch reads WIFLINIPVGIIGAIATLMLM. At 186–196 the chain is on the periplasmic side; that stretch reads PNYTMQTRRFD. A helical membrane pass occupies residues 197–217; sequence LSGFLLLAVGMAVLTLALDGS. Residues 218 to 224 lie on the Cytoplasmic side of the membrane; that stretch reads KGTGLSP. The chain crosses the membrane as a helical span at residues 225–245; the sequence is LAIAGLVAVGVVALVLYLLHA. At 246–262 the chain is on the periplasmic side; sequence RNNNRALFSLKLFRTRT. Residues 263-283 form a helical membrane-spanning segment; the sequence is FSLGLAGSFAGRIGSGMLPFM. Over 284–285 the chain is Cytoplasmic; the sequence is TP. A helical membrane pass occupies residues 286–306; the sequence is VFLQIGLGFSPFHAGLMMIPM. Residues 307-341 lie on the Periplasmic side of the membrane; sequence VLGSMGMKRIVVQVVNRFGYRRVLVATTLGLSLVT. The chain crosses the membrane as a helical span at residues 342–362; that stretch reads LLFMTTALLGWYYVLPFVLFL. Residues 363 to 395 lie on the Cytoplasmic side of the membrane; the sequence is QGMVNSTRFSSMNTLTLKDLPDNLASSGNSLLS. Residues 396-416 traverse the membrane as a helical segment; the sequence is MIMQLSMSIGVTIAGLLLGLF. Topologically, residues 417–430 are periplasmic; the sequence is GSQHVSIDSGTTQT. Residues 431-451 traverse the membrane as a helical segment; the sequence is VFMYTWLSMALIIALPAFIFA. Topologically, residues 452–471 are cytoplasmic; that stretch reads RVPNDTHQNVAISRRKRSAQ.

It belongs to the major facilitator superfamily. TCR/Tet family.

The protein resides in the cell inner membrane. The protein is Putative multidrug resistance protein MdtD of Escherichia coli (strain 55989 / EAEC).